The following is a 265-amino-acid chain: Polyprenol monophosphomannose synthase (265 aa).

Residues 1 to 10 (MSVPGEREQG) are compositionally biased toward basic and acidic residues. The interval 1–21 (MSVPGEREQGAGEDPATVRPT) is disordered.

Belongs to the glycosyltransferase 2 family. Interacts with Lnt (also called Ppm2, AC A0QZ13) upon coexpression in E.coli, which increases the PPM synthase activity of this protein.

It localises to the cytoplasm. It catalyses the reaction a di-trans,poly-cis-dolichyl phosphate + GDP-alpha-D-mannose = a di-trans,poly-cis-dolichyl beta-D-mannosyl phosphate + GDP. Functionally, transfers mannose from GDP-mannose to lipid acceptors to form polyprenol monophosphomannose (PPM); catalytic activity in vitro is enhanced by Lnt (AC A0QZ13). PMM is an alkai-stable sugar donor which adds mannose-phosphate residues to triacylated-PIM2, eventually leading to generation of the cell wall glycolipid lipoglycan modulins lipoarabinomannan (LAM) and lipomannan (LM). In Mycolicibacterium smegmatis (strain ATCC 700084 / mc(2)155) (Mycobacterium smegmatis), this protein is Polyprenol monophosphomannose synthase.